The primary structure comprises 556 residues: Formate--tetrahydrofolate ligase 1 (556 aa).

65-72 (TPAGEGKS) contributes to the ATP binding site.

Belongs to the formate--tetrahydrofolate ligase family.

It carries out the reaction (6S)-5,6,7,8-tetrahydrofolate + formate + ATP = (6R)-10-formyltetrahydrofolate + ADP + phosphate. Its pathway is one-carbon metabolism; tetrahydrofolate interconversion. The polypeptide is Formate--tetrahydrofolate ligase 1 (Streptococcus pyogenes serotype M2 (strain MGAS10270)).